Consider the following 294-residue polypeptide: Glyceraldehyde-3-phosphate dehydrogenase (294 aa).

The NAD(+) site is built by D19, K63, and T105. D-glyceraldehyde 3-phosphate is bound by residues 134–136 (SCT), T165, 194–195 (TG), and R217. C135 serves as the catalytic Nucleophile.

It belongs to the glyceraldehyde-3-phosphate dehydrogenase family. In terms of assembly, homotetramer.

It is found in the cytoplasm. It carries out the reaction D-glyceraldehyde 3-phosphate + phosphate + NAD(+) = (2R)-3-phospho-glyceroyl phosphate + NADH + H(+). It functions in the pathway carbohydrate degradation; glycolysis; pyruvate from D-glyceraldehyde 3-phosphate: step 1/5. In terms of biological role, catalyzes the oxidative phosphorylation of glyceraldehyde 3-phosphate (G3P) to 1,3-bisphosphoglycerate (BPG) using the cofactor NAD. The first reaction step involves the formation of a hemiacetal intermediate between G3P and a cysteine residue, and this hemiacetal intermediate is then oxidized to a thioester, with concomitant reduction of NAD to NADH. The reduced NADH is then exchanged with the second NAD, and the thioester is attacked by a nucleophilic inorganic phosphate to produce BPG. The sequence is that of Glyceraldehyde-3-phosphate dehydrogenase (gap) from Atlantibacter hermannii (Escherichia hermannii).